Here is a 940-residue protein sequence, read N- to C-terminus: UvrABC system protein A (940 aa).

31 to 38 (GLSGSGKS) is an ATP binding site. The segment at 252–279 (CPHCGYSMQELEPRLFSFNNPAGACGTC) adopts a C4-type zinc-finger fold. 2 ABC transporter domains span residues 309 to 586 (WDQK…PDSL) and 606 to 936 (RDKN…RFLK). 639–646 (GVSGSGKS) provides a ligand contact to ATP. The C4-type zinc-finger motif lies at 739–765 (CEACQGDGVIKVEMHFLPDVYVPCDVC).

This sequence belongs to the ABC transporter superfamily. UvrA family. Forms a heterotetramer with UvrB during the search for lesions.

It is found in the cytoplasm. The UvrABC repair system catalyzes the recognition and processing of DNA lesions. UvrA is an ATPase and a DNA-binding protein. A damage recognition complex composed of 2 UvrA and 2 UvrB subunits scans DNA for abnormalities. When the presence of a lesion has been verified by UvrB, the UvrA molecules dissociate. This chain is UvrABC system protein A, found in Vibrio vulnificus (strain CMCP6).